Consider the following 706-residue polypeptide: Paxillin-like protein 1 (706 aa).

Disordered stretches follow at residues 24–192, 222–258, 279–341, and 514–537; these read ERAG…EQDL, VLDQ…LNFE, AKQE…TKVE, and IDNS…SSDA. Over residues 35–64 the composition is skewed to polar residues; the sequence is PFSSQRNASTGSLQASVKSPPITRQRNVSA. 2 positions are modified to phosphoserine: S43 and S63. Composition is skewed to low complexity over residues 73–86 and 117–129; these read KSAY…AYSS and SSRP…SISR. Basic and acidic residues-rich tracts occupy residues 130–150 and 222–236; these read PSER…DRQA and VLDQ…KEES. Acidic residues predominate over residues 237-252; the sequence is SIEYESEGQQEDENDI. The segment covering 279–290 has biased composition (basic and acidic residues); sequence AKQEEKNTEPKI. The segment covering 296–308 has biased composition (polar residues); it reads TRESNTPSLTMNA. 2 consecutive LIM zinc-binding domains span residues 556-612 and 621-672; these read CRAC…CQKH and CKVC…CGNH.

This Saccharomyces cerevisiae (strain ATCC 204508 / S288c) (Baker's yeast) protein is Paxillin-like protein 1 (PXL1).